We begin with the raw amino-acid sequence, 648 residues long: A-type voltage-gated potassium channel KCND1 (648 aa).

Topologically, residues 1–183 are cytoplasmic; it reads MAAGVATWLP…RAFENPHTST (183 aa). The interaction with KCNIP1, KCNIP2, and other family members stretch occupies residues 2–20; sequence AAGVATWLPFARAAAVGWL. Residues 2–20 form an interaction with KCNIP2 region; sequence AAGVATWLPFARAAAVGWL. Residues histidine 104, cysteine 131, and cysteine 132 each coordinate Zn(2+). A disordered region spans residues 144–164; that stretch reads AERLAEDEEAEQAGDGPTLPA. A helical membrane pass occupies residues 184-205; the sequence is AALVFYYVTGFFIAVSVIANVV. Over 206–230 the chain is Extracellular; the sequence is ETIPCRSPTRRPPREQPCGDRFPLA. A helical membrane pass occupies residues 231-252; that stretch reads FFCMDTACVLIFTGEYLLRLFA. Residues 253-263 are Cytoplasmic-facing; that stretch reads APSRCRFLRSV. The helical transmembrane segment at 264–284 threads the bilayer; the sequence is MSLIDVVAILPYYIGLFMPKN. Residues 285–287 lie on the Extracellular side of the membrane; that stretch reads EDV. The helical; Voltage-sensor transmembrane segment at 288-308 threads the bilayer; it reads SGAFVTLRVFRVFRIFKFSRH. The Cytoplasmic segment spans residues 309–323; it reads SQGLRILGYTLKSCA. The segment at 310 to 323 is S4-S5 linker; sequence QGLRILGYTLKSCA. Residues 324 to 345 traverse the membrane as a helical segment; sequence SELGFLLFSLTMAIIIFATVMF. Topologically, residues 346-359 are extracellular; that stretch reads YAEKGTNKTNFTSI. Asparagine 352 and asparagine 355 each carry an N-linked (GlcNAc...) asparagine glycan. Residues 360-371 constitute an intramembrane region (helical); that stretch reads PAAFWYTIVTMT. Positions 372 to 377 match the Selectivity filter motif; sequence TLGYGD. The stretch at 372 to 379 is an intramembrane region; that stretch reads TLGYGDMV. Residues 380–386 lie on the Extracellular side of the membrane; sequence PSTIAGK. The helical transmembrane segment at 387 to 415 threads the bilayer; it reads IFGSICSLSGVLVIALPVPVIVSNFSRIY. The Cytoplasmic portion of the chain corresponds to 416–648; sequence HQNQRADKRR…LPETVKISSL (233 aa). Serine 458 bears the Phosphoserine mark. Positions 474–489 are mediates dendritic targeting; it reads FEQQHHHLLHCLEKTT. Residues 474 to 489 form a required for dendritic targeting region; it reads FEQQHHHLLHCLEKTT. Serine 555 carries the phosphoserine modification. Residues 601–636 are disordered; it reads IPTPPANTPDESQPSSPGGGGGGASSTLRNSSLGTP.

This sequence belongs to the potassium channel family. D (Shal) (TC 1.A.1.2) subfamily. Kv4.1/KCND1 sub-subfamily. In terms of assembly, component of heteromultimeric potassium channels. Identified in potassium channel complexes containing KCND1, KCND2, KCND3, KCNIP1, KCNIP2, KCNIP3, KCNIP4, DPP6 and DPP10.

It localises to the cell membrane. The catalysed reaction is K(+)(in) = K(+)(out). Its function is as follows. A-type voltage-gated potassium channel that mediates transmembrane potassium transport in excitable membranes in the brain. Mediates A-type current I(SA) in suprachiasmatic nucleus (SCN) neurons. Exhibits a low-threshold A-type current with a hyperpolarized steady-state inactivation midpoint and the recovery process was steeply voltage-dependent, with recovery being markedly faster at more negative potentials. May regulates repetitive firing rates in the suprachiasmatic nucleus (SCN) neurons and circadian rhythms in neuronal excitability and behavior. Contributes to the regulation of the circadian rhythm of action potential firing in suprachiasmatic nucleus neurons, which regulates the circadian rhythm of locomotor activity. The regulatory subunit KCNIP1 modulates the kinetics of channel inactivation, increases the current amplitudes and accelerates recovery from inactivation, shifts activation in a depolarizing direction. The regulatory subunit DPP10 decreases the voltage sensitivity of the inactivation channel gating. The chain is A-type voltage-gated potassium channel KCND1 from Bos taurus (Bovine).